A 348-amino-acid polypeptide reads, in one-letter code: Thioredoxin-related protein DsbJ (348 aa).

Positions 1–32 are cleaved as a signal peptide; sequence MILLQNIKRCSLKQLKVLATLLLSLSLPTLEA.

It is found in the periplasm. The chain is Thioredoxin-related protein DsbJ (dsbJ) from Chlamydia pneumoniae (Chlamydophila pneumoniae).